A 439-amino-acid polypeptide reads, in one-letter code: Protein pop-1 (439 aa).

Residues 1 to 38 form a disordered region; that stretch reads MMADEELGDEVKVFRRDEDADDDPMISGETSEQQLADD. Positions 9–18 are enriched in basic and acidic residues; that stretch reads DEVKVFRRDE. Residues 87–138 form an involved in nuclear asymmetry region; sequence SGLPIMFPMVVPQYLSPNPNINMMNMMTMRAAMAGAPLSPAFPAMFSPNPLF. Phosphoserine; by LIT1 is present on serine 125. Positions 199 to 269 form a DNA-binding region, HMG box; the sequence is IKKPLNAFMW…SHKEKYPQWS (71 aa). Residues 254–265 are compositionally biased toward basic and acidic residues; the sequence is AKKDRESHKEKY. Disordered stretches follow at residues 254–298, 329–365, and 385–439; these read AKKD…NNDQ, RSGS…MPMN, and SAHL…VCTL. Over residues 277–286 the composition is skewed to basic residues; sequence NKKKPKRKRD. 2 stretches are compositionally biased toward low complexity: residues 346-365 and 385-400; these read GCSS…MPMN and SAHL…SGTS. Residues 409–420 show a composition bias toward acidic residues; sequence SESDVDEDEDID. The span at 422-439 shows a compositional bias: polar residues; sequence TITQQTQEYIMQESVCTL.

Belongs to the TCF/LEF family. As to quaternary structure, interacts with hda-1. Interacts with bar-1. Interacts with par-5; the interaction is direct and is enhanced by lit-1-mediated pop-1 phosphorylation. The interaction also leads to the subsequent nuclear export of pop-1. Interacts (when phosphorylated on Ser-125) with lit-1; the interaction is dependent on the beta-catenin-lit-1 complex. Interacts with wrm-1. Phosphorylated on Ser-125 by lit-1 in the beta-catenin-lit-1 complex. Phosphorylation promotes the interaction of pop-1 and par-5 and the subsequent translocation of pop-1 from the nucleus to the cytoplasm.

The protein resides in the nucleus. Its subcellular location is the cytoplasm. Its function is as follows. Part of the Wnt signaling pathway essential for the specification of the mesodermal cell fate in early embryos. Required for asymmetrical division of somatic gonadal precursor descendants which initiate axis formation required to control organ shape. Similarly, involved in asymmetrical division of seam cells, a stem cell-like lineage. Represses expression of target genes via its interaction with hda-1 histone deacetylase. Required for specification of the M lineage-derived coelomocyte and sex myoblast fate. Regulates coelomocyte fate by positively regulating proliferation and ceh-34 and possibly eya-1 expression in M.dlpa and M.drpa precursors. The sequence is that of Protein pop-1 from Caenorhabditis briggsae.